The sequence spans 746 residues: NAD(P)H-quinone oxidoreductase subunit 5, chloroplastic (746 aa).

15 consecutive transmembrane segments (helical) span residues 9–29 (WIIPFAPLPFTMSIGLGLLLV), 40–60 (WTFPSVSLLSIAMVFSVNLSI), 89–109 (IDPLTSIMSILITTVGIMVLI), 122–139 (LRFFAYMSFSNTSMLGLV), 147–167 (IYIFWELVGMCSYLLIGFWFT), 185–205 (GDFGLLLGILGFYWITGSFEF), 219–239 (NGVNSLFATLCAFLLFVGAVA), 258–278 (TPISALIHAATMVAAGIFLVA), 280–300 (LLPLFTVIPYIMNLISLIGVI), 327–347 (LGYIMLAPGIGSYRAALFHLI), 396–416 (TTFLLGTLSLCGIPPLACFWS), 425–445 (WLYSPIFAIIACSTAGLTAFY), 546–566 (LLPLLGLVLFTLFVGSVGIPF), 605–625 (IYSVSIACFGIFIASLFYGSI), and 722–742 (YLFVYLSYVSILLLIYYFYFF).

It belongs to the complex I subunit 5 family. NDH is composed of at least 16 different subunits, 5 of which are encoded in the nucleus.

The protein resides in the plastid. It is found in the chloroplast thylakoid membrane. The catalysed reaction is a plastoquinone + NADH + (n+1) H(+)(in) = a plastoquinol + NAD(+) + n H(+)(out). It catalyses the reaction a plastoquinone + NADPH + (n+1) H(+)(in) = a plastoquinol + NADP(+) + n H(+)(out). Its function is as follows. NDH shuttles electrons from NAD(P)H:plastoquinone, via FMN and iron-sulfur (Fe-S) centers, to quinones in the photosynthetic chain and possibly in a chloroplast respiratory chain. The immediate electron acceptor for the enzyme in this species is believed to be plastoquinone. Couples the redox reaction to proton translocation, and thus conserves the redox energy in a proton gradient. The protein is NAD(P)H-quinone oxidoreductase subunit 5, chloroplastic (ndhF) of Calycanthus floridus var. glaucus (Eastern sweetshrub).